The sequence spans 187 residues: TATA-box-binding protein (187 aa).

Repeat copies occupy residues 10-86 (IENV…FDKL) and 101-179 (VQNI…VSRL).

Belongs to the TBP family.

Its function is as follows. General factor that plays a role in the activation of archaeal genes transcribed by RNA polymerase. Binds specifically to the TATA box promoter element which lies close to the position of transcription initiation. In Natronomonas pharaonis (strain ATCC 35678 / DSM 2160 / CIP 103997 / JCM 8858 / NBRC 14720 / NCIMB 2260 / Gabara) (Halobacterium pharaonis), this protein is TATA-box-binding protein.